Consider the following 101-residue polypeptide: NAD(P)H-quinone oxidoreductase subunit 4L, chloroplastic (101 aa).

The next 3 helical transmembrane spans lie at 2–22 (MLEHVLVLSAYLFSIGIYGLI), 32–52 (MCLELILNAVNINLVTFSDLF), and 61–81 (IFSIFVIAIAAAEAAIGPAIV).

The protein belongs to the complex I subunit 4L family. As to quaternary structure, NDH is composed of at least 16 different subunits, 5 of which are encoded in the nucleus.

Its subcellular location is the plastid. It localises to the chloroplast thylakoid membrane. It catalyses the reaction a plastoquinone + NADH + (n+1) H(+)(in) = a plastoquinol + NAD(+) + n H(+)(out). It carries out the reaction a plastoquinone + NADPH + (n+1) H(+)(in) = a plastoquinol + NADP(+) + n H(+)(out). NDH shuttles electrons from NAD(P)H:plastoquinone, via FMN and iron-sulfur (Fe-S) centers, to quinones in the photosynthetic chain and possibly in a chloroplast respiratory chain. The immediate electron acceptor for the enzyme in this species is believed to be plastoquinone. Couples the redox reaction to proton translocation, and thus conserves the redox energy in a proton gradient. This is NAD(P)H-quinone oxidoreductase subunit 4L, chloroplastic from Illicium oligandrum (Star anise).